The following is a 748-amino-acid chain: Catalase-peroxidase (748 aa).

Positions 91–236 (WHSAGTYRVG…LAAVQMGLIY (146 aa)) form a cross-link, tryptophyl-tyrosyl-methioninium (Trp-Tyr) (with M-262). Residue H92 is the Proton acceptor of the active site. The segment at 201–223 (AQPVADKAGHGKEHGRTDGGRNL) is disordered. The span at 207-221 (KAGHGKEHGRTDGGR) shows a compositional bias: basic and acidic residues. Residues 236-262 (YVNPEGPDGNPDPQASAHDIRETFARM) constitute a cross-link (tryptophyl-tyrosyl-methioninium (Tyr-Met) (with W-91)). Residue H277 coordinates heme b.

This sequence belongs to the peroxidase family. Peroxidase/catalase subfamily. As to quaternary structure, homodimer or homotetramer. Requires heme b as cofactor. Post-translationally, formation of the three residue Trp-Tyr-Met cross-link is important for the catalase, but not the peroxidase activity of the enzyme.

It carries out the reaction H2O2 + AH2 = A + 2 H2O. It catalyses the reaction 2 H2O2 = O2 + 2 H2O. Its function is as follows. Bifunctional enzyme with both catalase and broad-spectrum peroxidase activity. The polypeptide is Catalase-peroxidase (Bordetella avium (strain 197N)).